Consider the following 194-residue polypeptide: Pyridoxine/pyridoxamine 5'-phosphate oxidase (194 aa).

FMN contacts are provided by residues 42 to 47 (RVVLLK), 57 to 58 (FT), Arg-63, Lys-64, and Gln-86. Lys-47 contributes to the substrate binding site. Tyr-104, Arg-108, and Ser-112 together coordinate substrate. Residues 121-122 (QS) and Trp-166 contribute to the FMN site. 172–174 (RIH) is a binding site for substrate. FMN is bound at residue Arg-176.

This sequence belongs to the pyridoxamine 5'-phosphate oxidase family. Homodimer. FMN is required as a cofactor.

It catalyses the reaction pyridoxamine 5'-phosphate + O2 + H2O = pyridoxal 5'-phosphate + H2O2 + NH4(+). The enzyme catalyses pyridoxine 5'-phosphate + O2 = pyridoxal 5'-phosphate + H2O2. It participates in cofactor metabolism; pyridoxal 5'-phosphate salvage; pyridoxal 5'-phosphate from pyridoxamine 5'-phosphate: step 1/1. It functions in the pathway cofactor metabolism; pyridoxal 5'-phosphate salvage; pyridoxal 5'-phosphate from pyridoxine 5'-phosphate: step 1/1. In terms of biological role, catalyzes the oxidation of either pyridoxine 5'-phosphate (PNP) or pyridoxamine 5'-phosphate (PMP) into pyridoxal 5'-phosphate (PLP). This is Pyridoxine/pyridoxamine 5'-phosphate oxidase from Ehrlichia ruminantium (strain Welgevonden).